The sequence spans 162 residues: Cadmium metallothionein (162 aa).

Positions 1–2 (MD) are excised as a propeptide.

Its function is as follows. The metallothioneins are involved in the cellular sequestration of toxic metal ions. The sequence is that of Cadmium metallothionein (MTT1) from Tetrahymena thermophila.